The sequence spans 453 residues: Odorant receptor 83a (453 aa).

Residues M1–C28 are Cytoplasmic-facing. Residues I29 to V49 traverse the membrane as a helical segment. The Extracellular segment spans residues R50–D85. The helical transmembrane segment at F86 to Y106 threads the bilayer. Residues F107–L148 lie on the Cytoplasmic side of the membrane. The helical transmembrane segment at W149 to I169 threads the bilayer. Topologically, residues A170–Q203 are extracellular. Residues I204–I224 form a helical membrane-spanning segment. Residues S225–S322 lie on the Cytoplasmic side of the membrane. A helical transmembrane segment spans residues P323–S343. Topologically, residues T344 to G359 are extracellular. A helical transmembrane segment spans residues Q360 to F380. The Cytoplasmic portion of the chain corresponds to Q381–F408. Residues F409–V429 form a helical membrane-spanning segment. Over D430 to E453 the chain is Extracellular.

Belongs to the insect chemoreceptor superfamily. Heteromeric odorant receptor channel (TC 1.A.69) family. Or2a subfamily. In terms of assembly, interacts with Orco. Complexes exist early in the endomembrane system in olfactory sensory neurons (OSNs), coupling these complexes to the conserved ciliary trafficking pathway.

The protein localises to the cell membrane. Its function is as follows. Odorant receptor which mediates acceptance or avoidance behavior, depending on its substrates. The odorant receptor repertoire encodes a large collection of odor stimuli that vary widely in identity, intensity, and duration. May form a complex with Orco to form odorant-sensing units, providing sensitive and prolonged odorant signaling and calcium permeability. Involved in the behavioral responses to pentanol, ethyl acetate, and propyl acetate. The sequence is that of Odorant receptor 83a (Or83a) from Drosophila melanogaster (Fruit fly).